The sequence spans 1077 residues: Serine/threonine-protein kinase sel-5 (1077 aa).

The 271-residue stretch at 47–317 (VTIEKQIAEG…IYQTSVLAFE (271 aa)) folds into the Protein kinase domain. Residues 53–61 (IAEGGFAIV) and K75 each bind ATP. D178 serves as the catalytic Proton acceptor. Disordered regions lie at residues 347-444 (MRDG…TDGS), 488-554 (GFTD…SQVV), 616-813 (ELDS…TNPF), and 920-1077 (LISV…PTDL). The span at 369–399 (IQSSSKMASLSQQVPSISNISMPSGSGTVET) shows a compositional bias: polar residues. Residues 491-515 (DLDKPALPRDRAQTDGKRRLPHESD) show a composition bias toward basic and acidic residues. Low complexity predominate over residues 541–554 (SSQQTTSKTSSQVV). The segment covering 638–648 (LTVSTSSSAQP) has biased composition (polar residues). Positions 655–679 (TDEDDERQLLSETDEEEKYEIDEKE) are enriched in acidic residues. Composition is skewed to basic and acidic residues over residues 697-708 (DEQRMNDRRRYS) and 739-751 (DSRR…HDED). Residues 770 to 780 (EDDGLEDDDDH) show a composition bias toward acidic residues. Residues 799-810 (GTSTPHTQNPIT) are compositionally biased toward polar residues. The span at 927 to 936 (TDPPPPPLPK) shows a compositional bias: pro residues. Residues 941–950 (ASPTQETTAT) show a composition bias toward polar residues. The span at 960–969 (KLLKKEKKKE) shows a compositional bias: basic residues. Residues 970 to 989 (KKDGKKDKLKLEEYREKGSS) are compositionally biased toward basic and acidic residues. Positions 1054–1067 (LTGKNASFVNTSFQ) are enriched in polar residues.

Belongs to the protein kinase superfamily. Ser/Thr protein kinase family. Mg(2+) is required as a cofactor.

The protein localises to the cytoplasm. The catalysed reaction is L-seryl-[protein] + ATP = O-phospho-L-seryl-[protein] + ADP + H(+). It catalyses the reaction L-threonyl-[protein] + ATP = O-phospho-L-threonyl-[protein] + ADP + H(+). In terms of biological role, serine/threonine-protein kinase which may play a role in lin-12-mediated cell-fate decisions. The protein is Serine/threonine-protein kinase sel-5 of Caenorhabditis elegans.